The chain runs to 135 residues: HTH-type transcriptional repressor RghR (135 aa).

One can recognise an HTH cro/C1-type domain in the interval 8 to 63 (LRALREERKLTVNQLATYSGVSAAGISRIENGKRGVPKPATIKKLAEALKIPYEGL). Residues 19 to 38 (VNQLATYSGVSAAGISRIEN) constitute a DNA-binding region (H-T-H motif).

Its function is as follows. Represses the expression of yvaM and both rapG and rapH. Binds directly to the promoter regions of yvaM, rapG and rapH. This Bacillus subtilis (strain 168) protein is HTH-type transcriptional repressor RghR (rghR).